A 664-amino-acid chain; its full sequence is Probable L-type lectin-domain containing receptor kinase V.3 (664 aa).

Residues 1-26 (MSMSCKINWLMVLVIIALSNLESSLG) form the signal peptide. At 27–278 (RLVFEGSAGL…YPKAESQVKL (252 aa)) the chain is on the extracellular side. Positions 28–250 (LVFEGSAGLM…AIHYMWMWYV (223 aa)) are legume-lectin like. N-linked (GlcNAc...) asparagine glycosylation is found at Asn69, Asn116, Asn122, Asn174, and Asn197. The chain crosses the membrane as a helical span at residues 279–299 (IVLVTFLTLALFVALAASALI). Residues 300–664 (VFFYKRHKKL…LPSGRPRLFL (365 aa)) are Cytoplasmic-facing. Positions 335–617 (NGFKQLLGEG…GVSELPDNLL (283 aa)) constitute a Protein kinase domain. ATP is bound by residues 341–349 (LGEGGFGPV) and Lys364. Asp461 serves as the catalytic Proton acceptor.

In the C-terminal section; belongs to the protein kinase superfamily. Ser/Thr protein kinase family. This sequence in the N-terminal section; belongs to the leguminous lectin family.

The protein localises to the cell membrane. It catalyses the reaction L-seryl-[protein] + ATP = O-phospho-L-seryl-[protein] + ADP + H(+). The enzyme catalyses L-threonyl-[protein] + ATP = O-phospho-L-threonyl-[protein] + ADP + H(+). In Arabidopsis thaliana (Mouse-ear cress), this protein is Probable L-type lectin-domain containing receptor kinase V.3 (LECRK53).